Consider the following 252-residue polypeptide: Small ribosomal subunit protein uS3 (252 aa).

Residues 38–106 form the KH type-2 domain; that stretch reads IRKYIHARLS…EVQINIFEIK (69 aa). The disordered stretch occupies residues 214 to 252; sequence PLAGMDKKQSGTGGGKGGDAPRGKSNFNKGGKPDARKRK. A compositionally biased stretch (gly residues) spans 224–233; sequence GTGGGKGGDA.

Belongs to the universal ribosomal protein uS3 family. As to quaternary structure, part of the 30S ribosomal subunit. Forms a tight complex with proteins S10 and S14.

In terms of biological role, binds the lower part of the 30S subunit head. Binds mRNA in the 70S ribosome, positioning it for translation. The protein is Small ribosomal subunit protein uS3 of Flavobacterium johnsoniae (strain ATCC 17061 / DSM 2064 / JCM 8514 / BCRC 14874 / CCUG 350202 / NBRC 14942 / NCIMB 11054 / UW101) (Cytophaga johnsonae).